Consider the following 146-residue polypeptide: Angiogenin (146 aa).

Positions 1–24 (MAMSLCPLLLVFVLGLGLTPPSLA) are cleaved as a signal peptide. Gln-25 carries the post-translational modification Pyrrolidone carboxylic acid. His-37 (proton acceptor) is an active-site residue. Arg-45 provides a ligand contact to tRNA. 3 disulfide bridges follow: Cys-50–Cys-105, Cys-63–Cys-116, and Cys-81–Cys-131. Residues 55-59 (VRRHL) carry the Nucleolar localization signal motif. 2 residues coordinate tRNA: Cys-105 and Ile-127. The active-site Proton donor is the His-138.

This sequence belongs to the pancreatic ribonuclease family. In terms of assembly, homodimer. Interacts with RNH1; inhibiting ANG ribonuclease activity. Interacts with PCNA.

Its subcellular location is the secreted. It is found in the nucleus. The protein localises to the nucleolus. It localises to the cytoplasm. The protein resides in the stress granule. Has weak tRNA ribonuclease activity by itself due to partial autoinhibition by its C-terminus, which folds into a short alpha-helix that partially occludes the substrate-binding site. In absence of stress, the ribonuclease activity is inhibited by RNH1 in the cytoplasm. In response to stress, dissociates from RNH1 in the cytoplasm and associates with cytoplasmic ribosomes with vacant A-sites: ribosomes directly activate the tRNA ribonuclease activity of ANG by refolding the C-terminal alpha-helix. In response to stress, the angiogenic activity of ANG is inhibited by RNH1 in the nucleus. In terms of biological role, secreted ribonuclease that can either promote or restrict cell proliferation of target cells, depending on the context. Endocytosed in target cells via its receptor PLXNB2 and translocates to the cytoplasm or nucleus. Under stress conditions, localizes to the cytoplasm and promotes the assembly of stress granules (SGs): specifically cleaves a subset of tRNAs within anticodon loops to produce tRNA-derived stress-induced fragments (tiRNAs), resulting in translation repression and inhibition of cell proliferation. tiRNas also prevent formation of apoptosome, thereby promoting cell survival. Preferentially cleaves RNAs between a pyrimidine and an adenosine residue, suggesting that it cleaves the anticodon loop of tRNA(Ala) (32-UUAGCAU-38) after positions 33 and 36. Cleaves a subset of tRNAs, including tRNA(Ala), tRNA(Glu), tRNA(Gly), tRNA(Lys), tRNA(Val), tRNA(His), tRNA(Asp) and tRNA(Sec). Under growth conditions and in differentiated cells, translocates to the nucleus and stimulates ribosomal RNA (rRNA) transcription, including that containing the initiation site sequences of 45S rRNA, thereby promoting cell growth and proliferation. Angiogenin induces vascularization of normal and malignant tissues via its ability to promote rRNA transcription. Involved in hematopoietic stem and progenitor cell (HSPC) growth and survival by promoting rRNA transcription in growth conditions and inhibiting translation in response to stress, respectively. Mediates the crosstalk between myeloid and intestinal epithelial cells to protect the intestinal epithelial barrier integrity: secreted by myeloid cells and promotes intestinal epithelial cells proliferation and survival. Also mediates osteoclast-endothelial cell crosstalk in growing bone: produced by osteoclasts and protects the neighboring vascular cells against senescence by promoting rRNA transcription. This is Angiogenin (ANG) from Equus caballus (Horse).